A 239-amino-acid chain; its full sequence is Aspartate/glutamate leucyltransferase (239 aa).

The protein belongs to the R-transferase family. Bpt subfamily.

It localises to the cytoplasm. It carries out the reaction N-terminal L-glutamyl-[protein] + L-leucyl-tRNA(Leu) = N-terminal L-leucyl-L-glutamyl-[protein] + tRNA(Leu) + H(+). It catalyses the reaction N-terminal L-aspartyl-[protein] + L-leucyl-tRNA(Leu) = N-terminal L-leucyl-L-aspartyl-[protein] + tRNA(Leu) + H(+). Its function is as follows. Functions in the N-end rule pathway of protein degradation where it conjugates Leu from its aminoacyl-tRNA to the N-termini of proteins containing an N-terminal aspartate or glutamate. This Campylobacter jejuni subsp. jejuni serotype O:6 (strain 81116 / NCTC 11828) protein is Aspartate/glutamate leucyltransferase.